Consider the following 278-residue polypeptide: MAYQVTTFYHFTRLNCLAEKQSRWQELGDRLGLKGTILLAEEGVNATIAGESAAIEEMVKIMAADLGLTSVPQRHSWAKTIPFQRMKVKIKPEIVSLGQPQVNPEKQVGTYVSPQQWNQLLQDPDVVVIDTRNDYEVAIGTFQGAVNPCTKKFRQFPDYVKNNLDQQKNKKVAMFCTGGIRCEKASAYLLEEGFAEVYHLRGGILHYLETIAPEESLWQGECFVFDERVAVQEGLKVGSHALCDHCGYPLRVGDLAEIRYAVRHCPQCGLTVAVSNEL.

The Rhodanese domain occupies 122–216 (QDPDVVVIDT…YLETIAPEES (95 aa)). Cysteine 176 (cysteine persulfide intermediate) is an active-site residue.

It belongs to the TrhO family.

It catalyses the reaction uridine(34) in tRNA + AH2 + O2 = 5-hydroxyuridine(34) in tRNA + A + H2O. In terms of biological role, catalyzes oxygen-dependent 5-hydroxyuridine (ho5U) modification at position 34 in tRNAs. This is tRNA uridine(34) hydroxylase from Synechocystis sp. (strain ATCC 27184 / PCC 6803 / Kazusa).